The primary structure comprises 787 residues: Longitudinals lacking protein, isoforms A/B/D/L (787 aa).

The 66-residue stretch at 32–97 (VDCTLAAEGK…MYRGEVNISQ (66 aa)) folds into the BTB domain. Disordered stretches follow at residues 115–200 (LSDN…SSVL), 228–340 (SSGP…ASAS), 506–560 (AKDV…SGGK), and 653–677 (TTGSGQSPSNSGHNNSAGGGSSVLG). 6 stretches are compositionally biased toward low complexity: residues 162-175 (SGDVSGSREGSSSP), 228-251 (SSGPAAGTSSQASSTQQQQPLTST), 263-293 (TSSTAAPASGASASAAVQQAHLHQQQAQTTS), 329-340 (NSATGPNPASAS), 537-560 (HSSSNHSSNGNGSGKPTKTSSGGK), and 659-668 (SPSNSGHNNS). A C2H2-type 1; degenerate zinc finger spans residues 685-707 (HPCPVCGRVYKLKSSLRNHQKWE). The segment at 714–737 (FQCPFCVYRAKQKMHIGRHMERMH) adopts a C2H2-type 2 zinc-finger fold.

As to quaternary structure, isoform D interacts with JIL-1. As to expression, by stage 11, isoform B is expressed throughout the mesoderm, whereas isoform A, isoform D and isoform L are expressed throughout the ectoderm. Expression becomes restricted during later stages; starting from stage 14 to 16, isoform B is expressed in muscle. Isoform A, isoform D, and at low levels isoform B, are expressed in the CNS. Expression is also seen in specific types of cells in the embryo; isoform A and isoform L are expressed in a dynamic pattern in the ventral neurogenic region starting at stage 7. Isoform L is expressed around the tracheal pits at stage 11.

It localises to the nucleus. Putative transcription factor required for axon growth and guidance in the central and peripheral nervous systems. Repels CNS axons away from the midline by promoting the expression of the midline repellent sli and its receptor robo. This Drosophila melanogaster (Fruit fly) protein is Longitudinals lacking protein, isoforms A/B/D/L.